The chain runs to 710 residues: MGKTKSRGRRAEKKSKKNEPEFNEDVSNLDSDATFANHESSSTSGIPNTFFGLVDNNELDYFKQAESTLNINAFESEEERQGFINSVLEEAQGKELKLVTNQICSKLMERLILFANYNQLKKIFKQFQNHFVSLAFHKYASHVLETLLVRSAALIEKELTQTDEEQLQLQEEKEEEDKDSINDVPMEDLFISMLNEFKPHLTTMIDHSYASHVLRLLILILAGKELPSSITSNSTLRSKKSKIARKMIEIKDNEDFDRAFQTPQSFKNELRAYCQTIIAGLDTKSARELSIHKIGSPVLQLLIQVEGLVDRERSFWHLIFAKDSEGKDSVEESFVEYLLSDSVGSHFLESIIKNDGARPKYIERLYKLYMKDRVLKLAKRSTTGVYIIQALLFKLKPVEVEYILDQIIPELAELISIADNQNLDLANKLIDASISRGNYRRDEIINQLFIKFAPNYDIENPSDNTSTEFIENILQLTGSTLGNTRDDWPTAEERKRALFLEKLMEYDYKFVICTWFNFMALPIERFVQMCFHGVFCHVVEKALIVEPEEPKTIQILRKRLLNIFQSQIVGLACNSYGSHIVDTLWNFTVLLPMYKDRIASELLSESHKVKESTYGRLVWKNWGMELFVRKKYDWKALIKQQEQEYYGETEDSTEKRAKKPIELKMERLAEEKRRQEEMAERAQSGYTKRKLEEATGTGSEKKQKLRGRRR.

The segment covering 1-16 (MGKTKSRGRRAEKKSK) has biased composition (basic residues). Residues 1-43 (MGKTKSRGRRAEKKSKKNEPEFNEDVSNLDSDATFANHESSST) form a disordered region. 8 Pumilio repeats span residues 90 to 125 (EAQG…KIFK), 126 to 161 (QFQN…ELTQ), 196 to 232 (EFKP…SITS), 280 to 321 (GLDT…LIFA), 329 to 367 (SVEE…RLYK), 369 to 405 (YMKD…YILD), 520 to 557 (ALPI…QILR), and 562 to 600 (NIFQ…RIAS). The tract at residues 648–710 (ETEDSTEKRA…KKQKLRGRRR (63 aa)) is disordered. A compositionally biased stretch (basic and acidic residues) spans 652–680 (STEKRAKKPIELKMERLAEEKRRQEEMAE).

It belongs to the NOP9 family.

Its subcellular location is the nucleus. It is found in the nucleolus. Functionally, RNA-binding nucleolar protein required for pre-rRNA processing. Involved in production of 18S rRNA and assembly of small ribosomal subunit. This is Nucleolar protein 9 (NOP9) from Candida dubliniensis (strain CD36 / ATCC MYA-646 / CBS 7987 / NCPF 3949 / NRRL Y-17841) (Yeast).